Reading from the N-terminus, the 311-residue chain is Methionyl-tRNA formyltransferase (311 aa).

Position 112–115 (112–115 (SLLP)) interacts with (6S)-5,6,7,8-tetrahydrofolate.

This sequence belongs to the Fmt family.

It carries out the reaction L-methionyl-tRNA(fMet) + (6R)-10-formyltetrahydrofolate = N-formyl-L-methionyl-tRNA(fMet) + (6S)-5,6,7,8-tetrahydrofolate + H(+). Functionally, attaches a formyl group to the free amino group of methionyl-tRNA(fMet). The formyl group appears to play a dual role in the initiator identity of N-formylmethionyl-tRNA by promoting its recognition by IF2 and preventing the misappropriation of this tRNA by the elongation apparatus. The sequence is that of Methionyl-tRNA formyltransferase from Geobacter metallireducens (strain ATCC 53774 / DSM 7210 / GS-15).